Consider the following 237-residue polypeptide: MPEATAGPLSAEQGASLYRLMTWLSPAFPVGAFSYSSGLEWAVEAGDVADAASLRDWLGAMLEHGAGFCDGVFLAQAYRAVEAGDDAALRDVAELAAAMVPSAERHLETTAQGKAFIEIVRHAWASDGLARAVGACNGALAYPVAVGLVSATHRVPLAATLHAFLHAVVSNWISAGARLVPLGQTDSQRLLAALEPAVIATGDRALRASLDDLGGATFRADLASLRHETQYTRLFRS.

Belongs to the UreF family. UreD, UreF and UreG form a complex that acts as a GTP-hydrolysis-dependent molecular chaperone, activating the urease apoprotein by helping to assemble the nickel containing metallocenter of UreC. The UreE protein probably delivers the nickel.

It localises to the cytoplasm. Its function is as follows. Required for maturation of urease via the functional incorporation of the urease nickel metallocenter. The sequence is that of Urease accessory protein UreF from Rhodopseudomonas palustris (strain HaA2).